The primary structure comprises 583 residues: Kelch-like protein 38 (583 aa).

Positions 34–101 (TDVILCTEDK…IYTGSITITM (68 aa)) constitute a BTB domain. One can recognise a BACK domain in the interval 136–237 (CLSMIRLSEI…HPTYLFQFIA (102 aa)). Kelch repeat units lie at residues 285–332 (TLVV…CIHS), 333–385 (ILYV…SYLH), 386–433 (FIFA…ANDQ), 435–481 (IYVF…VIED), 482–523 (KIYI…VINN), and 525–575 (LYVT…PLIC).

This chain is Kelch-like protein 38 (klhl38), found in Danio rerio (Zebrafish).